Consider the following 113-residue polypeptide: Protein SPIRAL1-like 1 (113 aa).

Residues 1–12 (MGRGVSVGGGQS) are compositionally biased toward gly residues. The disordered stretch occupies residues 1–50 (MGRGVSVGGGQSSLGYLFGSGEAPKPAINNAPAPSSETLPISADPSPKHV). Positions 23 to 34 (APKPAINNAPAP) are enriched in low complexity. Ser69 is modified (phosphoserine). A disordered region spans residues 79-113 (QNTGNFLTDRPSTKVHAAPGGGSSLDYLFGGGGSN). Residues 97 to 113 (PGGGSSLDYLFGGGGSN) show a composition bias toward gly residues.

The protein belongs to the SPIRAL1 family. Detected in pollen of mature flowers.

Its function is as follows. Acts redundantly with SPR1 in maintaining the cortical microtubules organization essential for anisotropic cell growth. The chain is Protein SPIRAL1-like 1 (SP1L1) from Arabidopsis thaliana (Mouse-ear cress).